A 268-amino-acid chain; its full sequence is Putative hydro-lyase PSPTO_5379 (268 aa).

This sequence belongs to the D-glutamate cyclase family.

This Pseudomonas syringae pv. tomato (strain ATCC BAA-871 / DC3000) protein is Putative hydro-lyase PSPTO_5379.